The following is a 48-amino-acid chain: Light-harvesting protein B-870 beta chain (48 aa).

Over A2–K21 the chain is Cytoplasmic. Residues H20 and H38 each contribute to the a bacteriochlorophyll site. The chain crosses the membrane as a helical span at residues F22–W44. The Periplasmic segment spans residues R45–L48.

In terms of assembly, an alpha/beta heterodimer. The core complex is formed by different alpha and beta chains, binding bacteriochlorophyll molecules, and arranged most probably in tetrameric structures disposed around the reaction center. The non-pigmented gamma chains may constitute additional components.

The protein localises to the cell inner membrane. Functionally, antenna complexes are light-harvesting systems, which transfer the excitation energy to the reaction centers. This is Light-harvesting protein B-870 beta chain (pufB) from Rubrivivax gelatinosus (Rhodocyclus gelatinosus).